Reading from the N-terminus, the 368-residue chain is Flagellar P-ring protein (368 aa).

An N-terminal signal peptide occupies residues 1 to 22; sequence MLIPLARAVLALALLGAGAAHA.

Belongs to the FlgI family. The basal body constitutes a major portion of the flagellar organelle and consists of four rings (L,P,S, and M) mounted on a central rod.

Its subcellular location is the periplasm. The protein resides in the bacterial flagellum basal body. Functionally, assembles around the rod to form the L-ring and probably protects the motor/basal body from shearing forces during rotation. This chain is Flagellar P-ring protein, found in Bordetella bronchiseptica (strain ATCC BAA-588 / NCTC 13252 / RB50) (Alcaligenes bronchisepticus).